Consider the following 114-residue polypeptide: Fumarate reductase subunit D (114 aa).

A run of 3 helical transmembrane segments spans residues 24 to 44 (VSAIFLPVVILIIGLLLPFGL), 50 to 70 (LITFAYSWIGKLVILVLTIFP), and 92 to 112 (GGFIFYGLATIYTVWVLFAVI).

The protein belongs to the FrdD family. In terms of assembly, part of an enzyme complex containing four subunits: a flavoprotein (FrdA), an iron-sulfur protein (FrdB), and two hydrophobic anchor proteins (FrdC and FrdD).

It is found in the cell inner membrane. In terms of biological role, anchors the catalytic components of the fumarate reductase complex to the cell membrane, binds quinones. This Haemophilus influenzae (strain ATCC 51907 / DSM 11121 / KW20 / Rd) protein is Fumarate reductase subunit D.